The following is a 67-amino-acid chain: UPF0434 protein RALTA_A0561 (67 aa).

Belongs to the UPF0434 family.

In Cupriavidus taiwanensis (strain DSM 17343 / BCRC 17206 / CCUG 44338 / CIP 107171 / LMG 19424 / R1) (Ralstonia taiwanensis (strain LMG 19424)), this protein is UPF0434 protein RALTA_A0561.